The following is a 117-amino-acid chain: Larval cuticle protein A2B (117 aa).

The stretch at A12–V15 is repeat 1. A Chitin-binding type R&amp;R domain is found at H29 to A95. The stretch at A108–V111 is repeat 2.

Its function is as follows. Component of the cuticle of the larva of Tenebrio molitor. In Tenebrio molitor (Yellow mealworm beetle), this protein is Larval cuticle protein A2B.